The chain runs to 318 residues: Nodulation protein D 2 (318 aa).

The region spanning 6 to 63 is the HTH lysR-type domain; it reads LDLNLLVALDALTTERNLTAAARSINLSQPAMSAAIGRLRDYFRDELFTMNGRELRLT. Positions 23–42 form a DNA-binding region, H-T-H motif; sequence LTAAARSINLSQPAMSAAIG.

This sequence belongs to the LysR transcriptional regulatory family.

Functionally, nodD regulates the expression of the nodABCFE genes which encode other nodulation proteins. NodD is also a negative regulator of its own expression. Binds flavonoids as inducers. This chain is Nodulation protein D 2 (nodD2), found in Rhizobium leguminosarum bv. phaseoli.